A 249-amino-acid polypeptide reads, in one-letter code: Type III pantothenate kinase (249 aa).

Residue 6-13 (DAGNSRIK) participates in ATP binding. Residues phenylalanine 77 and 98–101 (GVDR) contribute to the substrate site. Aspartate 100 functions as the Proton acceptor in the catalytic mechanism. Position 121 (aspartate 121) interacts with K(+). Serine 124 contacts ATP. Residue threonine 177 coordinates substrate.

The protein belongs to the type III pantothenate kinase family. As to quaternary structure, homodimer. NH4(+) serves as cofactor. It depends on K(+) as a cofactor.

The protein resides in the cytoplasm. It carries out the reaction (R)-pantothenate + ATP = (R)-4'-phosphopantothenate + ADP + H(+). Its pathway is cofactor biosynthesis; coenzyme A biosynthesis; CoA from (R)-pantothenate: step 1/5. Catalyzes the phosphorylation of pantothenate (Pan), the first step in CoA biosynthesis. The polypeptide is Type III pantothenate kinase (Teredinibacter turnerae (strain ATCC 39867 / T7901)).